The following is a 262-amino-acid chain: Acyl-[acyl-carrier-protein]--UDP-N-acetylglucosamine O-acyltransferase (262 aa).

It belongs to the transferase hexapeptide repeat family. LpxA subfamily. Homotrimer.

Its subcellular location is the cytoplasm. The enzyme catalyses a (3R)-hydroxyacyl-[ACP] + UDP-N-acetyl-alpha-D-glucosamine = a UDP-3-O-[(3R)-3-hydroxyacyl]-N-acetyl-alpha-D-glucosamine + holo-[ACP]. The protein operates within glycolipid biosynthesis; lipid IV(A) biosynthesis; lipid IV(A) from (3R)-3-hydroxytetradecanoyl-[acyl-carrier-protein] and UDP-N-acetyl-alpha-D-glucosamine: step 1/6. In terms of biological role, involved in the biosynthesis of lipid A, a phosphorylated glycolipid that anchors the lipopolysaccharide to the outer membrane of the cell. The sequence is that of Acyl-[acyl-carrier-protein]--UDP-N-acetylglucosamine O-acyltransferase from Burkholderia vietnamiensis (strain G4 / LMG 22486) (Burkholderia cepacia (strain R1808)).